Reading from the N-terminus, the 352-residue chain is Septin-2B (352 aa).

Residues Lys33 to Lys305 form the Septin-type G domain. Residues Gly43–Ser50 form a G1 motif region. GTP is bound by residues Gly43 to Ser50, Thr77, Gly103, Lys182 to Glu190, Gly240, and Arg255. Residues Asp100–Gly103 form a G3 motif region. The G4 motif stretch occupies residues Ala181–Asp184. The segment at Trp259–His269 is important for dimerization.

The protein belongs to the TRAFAC class TrmE-Era-EngA-EngB-Septin-like GTPase superfamily. Septin GTPase family. In terms of assembly, septins polymerize into heterooligomeric protein complexes that form filaments, and associate with cellular membranes, actin filaments and microtubules. GTPase activity is required for filament formation. Can form heterooligomers with other family members and form filaments. Interacts with wdpcp.

The protein localises to the cytoplasm. It is found in the cytoskeleton. Its subcellular location is the spindle. The protein resides in the cleavage furrow. It localises to the midbody. The protein localises to the cell projection. It is found in the cilium membrane. In terms of biological role, filament-forming cytoskeletal GTPase. Required for normal organization of the actin cytoskeleton. Plays a role in the biogenesis of polarized columnar-shaped epithelium. Required for the progression through mitosis through regulation of chromosome congression. During anaphase, may be required for chromosome segregation and spindle elongation. Probably plays a role in ciliogenesis and collective cell movements including convergent extension during gastrulation. In cilia, required for the integrity of the diffusion barrier at the base of the primary cilium that prevents diffusion of transmembrane proteins between the cilia and plasma membranes. Controls cell shape and not polarization of cells during convergent extension. This is Septin-2B (sept2-b) from Xenopus laevis (African clawed frog).